The sequence spans 295 residues: Sulfotransferase 1A1 (295 aa).

48-53 (KSGTTW) is a binding site for 3'-phosphoadenylyl sulfate. 106–108 (KTH) provides a ligand contact to substrate. Histidine 108 serves as the catalytic Proton acceptor. 3'-phosphoadenylyl sulfate-binding positions include arginine 130, serine 138, tyrosine 193, 227–232 (TSFKEM), and 255–259 (FMRKG). Serine 138 is modified (phosphoserine).

It belongs to the sulfotransferase 1 family. As to quaternary structure, homodimer. Distal lung parenchyma.

The protein resides in the cytoplasm. The enzyme catalyses a phenol + 3'-phosphoadenylyl sulfate = an aryl sulfate + adenosine 3',5'-bisphosphate + H(+). It catalyses the reaction 17beta-estradiol + 3'-phosphoadenylyl sulfate = 17beta-estradiol 3-sulfate + adenosine 3',5'-bisphosphate + H(+). The catalysed reaction is 4-ethylphenol + 3'-phosphoadenylyl sulfate = 4-ethylphenyl sulfate + adenosine 3',5'-bisphosphate + H(+). It carries out the reaction 4-nitrophenol + 3'-phosphoadenylyl sulfate = 4-nitrophenyl sulfate + adenosine 3',5'-bisphosphate. The enzyme catalyses dopamine + 3'-phosphoadenylyl sulfate = dopamine 3-O-sulfate + adenosine 3',5'-bisphosphate + H(+). It catalyses the reaction dopamine + 3'-phosphoadenylyl sulfate = dopamine 4-O-sulfate + adenosine 3',5'-bisphosphate + H(+). The catalysed reaction is 3,3',5-triiodo-L-thyronine + 3'-phosphoadenylyl sulfate = 3,3',5-triiodo-L-thyronine sulfate + adenosine 3',5'-bisphosphate + H(+). It carries out the reaction 3,3',5'-triiodo-L-thyronine + 3'-phosphoadenylyl sulfate = 3,3',5'-triiodo-L-thyronine sulfate + adenosine 3',5'-bisphosphate + H(+). The enzyme catalyses 3,3'-diiodo-L-thyronine + 3'-phosphoadenylyl sulfate = 3,3'-diiodo-L-thyronine sulfate + adenosine 3',5'-bisphosphate + H(+). It catalyses the reaction L-thyroxine + 3'-phosphoadenylyl sulfate = L-thyroxine sulfate + adenosine 3',5'-bisphosphate + H(+). Its function is as follows. Sulfotransferase that utilizes 3'-phospho-5'-adenylyl sulfate (PAPS) as sulfonate donor to catalyze the sulfate conjugation of a wide variety of acceptor molecules bearing a hydroxyl or an amine group. Sulfonation increases the water solubility of most compounds, and therefore their renal excretion, but it can also result in bioactivation to form active metabolites. Displays broad substrate specificity for small phenolic compounds. Plays an important role in the sulfonation of endogenous molecules such as steroid hormones. Mediates also the metabolic activation of carcinogenic N-hydroxyarylamines leading to highly reactive intermediates capable of forming DNA adducts, potentially resulting in mutagenesis. May play a role in gut microbiota-host metabolic interaction. O-sulfonates 4-ethylphenol (4-EP), a dietary tyrosine-derived metabolite produced by gut bacteria. The product 4-EPS crosses the blood-brain barrier and may negatively regulate oligodendrocyte maturation and myelination, affecting the functional connectivity of different brain regions associated with the limbic system. Catalyzes the sulfate conjugation of dopamine. Catalyzes the sulfation of T4 (L-thyroxine/3,5,3',5'-tetraiodothyronine), T3 (3,5,3'-triiodothyronine), rT3 (3,3',5'-triiodothyronine) and 3,3'-T2 (3,3'-diiodothyronine), with a substrate preference of 3,3'-T2 &gt; rT3 &gt; T3 &gt; T4. The polypeptide is Sulfotransferase 1A1 (SULT1A1) (Bos taurus (Bovine)).